A 135-amino-acid chain; its full sequence is Probable histone H2A.2 (135 aa).

It belongs to the histone H2A family. As to quaternary structure, the nucleosome is a histone octamer containing two molecules each of H2A, H2B, H3 and H4 assembled in one H3-H4 heterotetramer and two H2A-H2B heterodimers. The octamer wraps approximately 147 bp of DNA.

The protein resides in the nucleus. It localises to the chromosome. Its function is as follows. Core component of nucleosome. Nucleosomes wrap and compact DNA into chromatin, limiting DNA accessibility to the cellular machineries which require DNA as a template. Histones thereby play a central role in transcription regulation, DNA repair, DNA replication and chromosomal stability. DNA accessibility is regulated via a complex set of post-translational modifications of histones, also called histone code, and nucleosome remodeling. This Oryza sativa subsp. indica (Rice) protein is Probable histone H2A.2.